The following is a 287-amino-acid chain: MKKKNHKYRGKKLNRGESPNFSGQHLMHNKKLIEEIVDRANISIDDTVLELGAGKGALTTVLSQKAGKVLAVENDSKFVDILTRKTAQHSNTKIIHQDIMKIHLPKEKFVVVSNIPYAITTPIMKMLLNNPASGFQKGIIVMEKGAAKRFTSKFIKNSYVLAWRMWFDIGIVREISKEHFSPPPKVDSAMVRITRKKDAPLSHKHYIAFRGLAEYALKEPNIPLCVALRGIFTPRQMKHLRKSLKINNEKTVGTLTENQWAVIFNTMTQYVMHHKWPRANKRKPGEI.

Positions 1–13 are enriched in basic residues; sequence MKKKNHKYRGKKL. The disordered stretch occupies residues 1–21; it reads MKKKNHKYRGKKLNRGESPNF. The S-adenosyl-L-methionine site is built by histidine 25, methionine 27, glycine 52, glutamate 73, aspartate 98, and asparagine 114.

The protein belongs to the class I-like SAM-binding methyltransferase superfamily. rRNA adenine N(6)-methyltransferase family.

In terms of biological role, involved in erythromycin resistance. The protein is rRNA adenine N-6-methyltransferase (ermD) of Bacillus licheniformis.